A 235-amino-acid polypeptide reads, in one-letter code: uncharacterized protein (235 aa).

7 helical membrane-spanning segments follow: residues V2–L22, M34–A54, L56–E76, F102–G122, M147–I167, I178–L198, and M210–W230.

The protein resides in the cell membrane. This is an uncharacterized protein from Escherichia coli (strain K12).